The following is a 591-amino-acid chain: BRCA1-associated protein (591 aa).

Serine 52 carries the post-translational modification Phosphoserine. A compositionally biased stretch (basic and acidic residues) spans 82–93; the sequence is DEVRDTVEEKKP. The tract at residues 82-124 is disordered; the sequence is DEVRDTVEEKKPSAAPVSAQRSREQSESVNTAPESPSKQLPDQ. Over residues 108–124 the composition is skewed to polar residues; sequence ESVNTAPESPSKQLPDQ. Phosphoserine occurs at positions 116 and 118. The RING-type zinc finger occupies 263–303; sequence CTVCLERMDESVNGILTTLCNHSFHSQCLQRWDDTTCPVCR. A UBP-type; degenerate zinc finger spans residues 300-392; the sequence is PVCRYCQTPE…GKIVQYECEG (93 aa). Zn(2+)-binding residues include cysteine 316, cysteine 319, cysteine 328, cysteine 331, cysteine 336, histidine 343, histidine 347, and histidine 353. Residues 430 to 536 adopt a coiled-coil conformation; that stretch reads EKDTAEEINN…EIQEQLRDVM (107 aa). Residues 563–591 are disordered; that stretch reads IAMASAPNPPSSGAGGKLQSRKGRSKRGK. Residues 581 to 591 show a composition bias toward basic residues; that stretch reads QSRKGRSKRGK.

As to quaternary structure, interacts with the nuclear localization signal of BRCA1 and with the N-terminal of KSR1. The C-terminal portion of BRCA1 interacts with DDB1. Isoform 2 is highly expressed in testis, lower levels in brain, heart, lung, stomach, colon, uterus, liver and kidney. Isoform 1 is only expressed in the testis. Isoform 2 is predominant over isoform 1 in both fetal and adult testis.

Its subcellular location is the cytoplasm. The enzyme catalyses S-ubiquitinyl-[E2 ubiquitin-conjugating enzyme]-L-cysteine + [acceptor protein]-L-lysine = [E2 ubiquitin-conjugating enzyme]-L-cysteine + N(6)-ubiquitinyl-[acceptor protein]-L-lysine.. It participates in protein modification; protein ubiquitination. Negatively regulates MAP kinase activation by limiting the formation of Raf/MEK complexes probably by inactivation of the KSR1 scaffold protein. Also acts as a Ras responsive E3 ubiquitin ligase that, on activation of Ras, is modified by auto-polyubiquitination resulting in the release of inhibition of Raf/MEK complex formation. May also act as a cytoplasmic retention protein with a role in regulating nuclear transport. This is BRCA1-associated protein from Mus musculus (Mouse).